A 554-amino-acid chain; its full sequence is MKLLKGSGAALLALFFALVYLLPINSRLLWQPDETRYAEISREMLQRGDWVVPHLLGIRYFEKPIAGYWFNNISQWIFGDTNFAVRFGSIFSTALSAVFVYWLATLLWRNRSTSFLAALIYLSMLLVFSIGSYAVLDPMISLWLTASMVCFYLTLRAETAKQKIGAYLLLGLACGMGFMTKGFLALAVPVISVLPIVIQQKRVKELIIFGPIAIVGAVILSLPWALAIAQREPDFWHYFFWVEHIQRFAEKDAQHKAPIWYYLPILCLGVLPWLGLLPAALLKGWRERVARPELFFLLSWVLMPLIFFSVAKGKLPTYILPCMAPLSLLMAAYATDCANKMHMRALKVNGAINLIFGFICALAILVIGMGWVGHLVAYGPQEHQKVILATIAFAGWGIVGFATMRNNARHWHWAAACPLLFILLVGYLIPQQVIDSKQPQNFIQNNFNELSSSRYVATDSVGVAAGLAWELKRSDILMFSEKGELSYGLNYADSGDHYISAQDFSDWLVHARQKGDVSLVIQLSRNEKIPDSLPAADKVSLMNRLALLWYKKTP.

11 helical membrane-spanning segments follow: residues 4 to 24 (LKGSGAALLALFFALVYLLPI), 87 to 107 (FGSIFSTALSAVFVYWLATLL), 115 to 135 (FLAALIYLSMLLVFSIGSYAV), 178 to 198 (FMTKGFLALAVPVISVLPIVI), 206 to 226 (LIIFGPIAIVGAVILSLPWAL), 262 to 282 (YLPILCLGVLPWLGLLPAALL), 293 to 313 (ELFFLLSWVLMPLIFFSVAKG), 315 to 335 (LPTYILPCMAPLSLLMAAYAT), 352 to 372 (INLIFGFICALAILVIGMGWV), 384 to 404 (QKVILATIAFAGWGIVGFATM), and 410 to 430 (HWHWAAACPLLFILLVGYLIP).

This sequence belongs to the glycosyltransferase 83 family.

The protein localises to the cell inner membrane. It catalyses the reaction 4-amino-4-deoxy-alpha-L-arabinopyranosyl di-trans,octa-cis-undecaprenyl phosphate + lipid IVA = lipid IIA + di-trans,octa-cis-undecaprenyl phosphate.. It participates in lipopolysaccharide metabolism; 4-amino-4-deoxy-beta-L-arabinose-lipid A biosynthesis. In terms of biological role, catalyzes the transfer of the L-Ara4N moiety of the glycolipid undecaprenyl phosphate-alpha-L-Ara4N to lipid A. The modified arabinose is attached to lipid A and is required for resistance to polymyxin and cationic antimicrobial peptides. The polypeptide is Undecaprenyl phosphate-alpha-4-amino-4-deoxy-L-arabinose arabinosyl transferase (Yersinia enterocolitica serotype O:8 / biotype 1B (strain NCTC 13174 / 8081)).